Reading from the N-terminus, the 595-residue chain is UvrABC system protein C (595 aa).

The 78-residue stretch at 17–94 (IEPGCYLMKD…IKQYQPRYNI (78 aa)) folds into the GIY-YIG domain. In terms of domain architecture, UVR spans 199-234 (KTILHNLEQKMQESSESLDFERAKEYRDLIQHIHNL).

The protein belongs to the UvrC family. As to quaternary structure, interacts with UvrB in an incision complex.

The protein localises to the cytoplasm. Functionally, the UvrABC repair system catalyzes the recognition and processing of DNA lesions. UvrC both incises the 5' and 3' sides of the lesion. The N-terminal half is responsible for the 3' incision and the C-terminal half is responsible for the 5' incision. This is UvrABC system protein C from Staphylococcus saprophyticus subsp. saprophyticus (strain ATCC 15305 / DSM 20229 / NCIMB 8711 / NCTC 7292 / S-41).